Reading from the N-terminus, the 137-residue chain is Basic phospholipase A2 2 (137 aa).

The signal sequence occupies residues 1–11 (LVAVCVSLLGA). The propeptide occupies 12-19 (ANIPPQPL). Intrachain disulfides connect Cys-30-Cys-89, Cys-44-Cys-136, Cys-46-Cys-62, Cys-61-Cys-117, Cys-68-Cys-110, Cys-78-Cys-103, and Cys-96-Cys-108. Tyr-45 and Gly-47 together coordinate Ca(2+). Alpha-D-mannopyranose is bound at residue Tyr-48. Gly-49 is a binding site for Ca(2+). The active site involves His-65. Asp-66 is a binding site for Ca(2+). Asp-66 lines the alpha-D-mannopyranose pocket. Residue Asp-111 is part of the active site.

The protein belongs to the phospholipase A2 family. Group I subfamily. D49 sub-subfamily. Homodimer; non-covalently linked. Requires Ca(2+) as cofactor. Homodimerization and interaction of the catalytically important Asp-49 (here Asp-111) with mannose molecules may render this protein inactive. In terms of tissue distribution, expressed by the venom gland.

The protein resides in the secreted. The enzyme catalyses a 1,2-diacyl-sn-glycero-3-phosphocholine + H2O = a 1-acyl-sn-glycero-3-phosphocholine + a fatty acid + H(+). Functionally, snake venom phospholipase A2 (PLA2) that shows anticoagulant and neurotoxic activities. Its function is as follows. PLA2 catalyzes the calcium-dependent hydrolysis of the 2-acyl groups in 3-sn-phosphoglycerides. This chain is Basic phospholipase A2 2, found in Bungarus caeruleus (Indian krait).